We begin with the raw amino-acid sequence, 235 residues long: Ubiquinone/menaquinone biosynthesis C-methyltransferase UbiE (235 aa).

The S-adenosyl-L-methionine site is built by Thr60, Asp81, and Ser126.

Belongs to the class I-like SAM-binding methyltransferase superfamily. MenG/UbiE family.

The catalysed reaction is a 2-demethylmenaquinol + S-adenosyl-L-methionine = a menaquinol + S-adenosyl-L-homocysteine + H(+). The enzyme catalyses a 2-methoxy-6-(all-trans-polyprenyl)benzene-1,4-diol + S-adenosyl-L-methionine = a 5-methoxy-2-methyl-3-(all-trans-polyprenyl)benzene-1,4-diol + S-adenosyl-L-homocysteine + H(+). The protein operates within quinol/quinone metabolism; menaquinone biosynthesis; menaquinol from 1,4-dihydroxy-2-naphthoate: step 2/2. Its pathway is cofactor biosynthesis; ubiquinone biosynthesis. Methyltransferase required for the conversion of demethylmenaquinol (DMKH2) to menaquinol (MKH2) and the conversion of 2-polyprenyl-6-methoxy-1,4-benzoquinol (DDMQH2) to 2-polyprenyl-3-methyl-6-methoxy-1,4-benzoquinol (DMQH2). The polypeptide is Ubiquinone/menaquinone biosynthesis C-methyltransferase UbiE (Citrifermentans bemidjiense (strain ATCC BAA-1014 / DSM 16622 / JCM 12645 / Bem) (Geobacter bemidjiensis)).